Here is a 312-residue protein sequence, read N- to C-terminus: Isethionate sulfite-lyase activating enzyme (312 aa).

The Radical SAM core domain maps to His-20–Leu-304. [4Fe-4S] cluster is bound by residues Cys-34, Cys-38, Cys-41, Cys-60, Cys-66, Cys-69, Cys-73, Cys-93, Cys-96, Cys-100, and Cys-104. Trp-40–Ser-42 lines the S-adenosyl-L-methionine pocket. 4Fe-4S ferredoxin-type domains are found at residues Ala-51–Asp-83 and Asp-84–Lys-115. Residues Gly-144, Asp-193 to Lys-195, and His-267 contribute to the S-adenosyl-L-methionine site.

Belongs to the organic radical-activating enzymes family. In terms of assembly, monomer. Requires [4Fe-4S] cluster as cofactor.

It catalyses the reaction glycyl-[protein] + reduced [flavodoxin] + S-adenosyl-L-methionine = glycin-2-yl radical-[protein] + semiquinone [flavodoxin] + 5'-deoxyadenosine + L-methionine + H(+). Its pathway is organosulfur degradation; alkanesulfonate degradation. Involved in an anaerobic respiration pathway that converts the sulfonate isethionate (2-hydroxyethanesulfonate) to ammonia, acetate and sulfide. Catalyzes activation of the isethionate sulfite-lyase IslA under anaerobic conditions by generation of an organic free radical on a glycine residue, via a homolytic cleavage of S-adenosyl-L-methionine (SAM). This is Isethionate sulfite-lyase activating enzyme from Desulfovibrio desulfuricans (strain ATCC 27774 / DSM 6949 / MB).